Here is a 33-residue protein sequence, read N- to C-terminus: Protamine TP14 (33 aa).

The disordered stretch occupies residues 1-33; it reads MPRRRRSSRPPVRRRRRPRVSRRRRRRGGRRRR.

In terms of tissue distribution, testis.

It localises to the nucleus. Its subcellular location is the chromosome. Functionally, protamines substitute for histones in the chromatin of sperm during the haploid phase of spermatogenesis. They compact sperm DNA into a highly condensed, stable and inactive complex. The chain is Protamine TP14 from Oncorhynchus mykiss (Rainbow trout).